The sequence spans 125 residues: Small ribosomal subunit protein eS6 (125 aa).

Belongs to the eukaryotic ribosomal protein eS6 family.

This is Small ribosomal subunit protein eS6 from Pyrococcus horikoshii (strain ATCC 700860 / DSM 12428 / JCM 9974 / NBRC 100139 / OT-3).